The primary structure comprises 206 residues: Small ribosomal subunit protein eS1 (206 aa).

This sequence belongs to the eukaryotic ribosomal protein eS1 family.

The sequence is that of Small ribosomal subunit protein eS1 from Natronomonas pharaonis (strain ATCC 35678 / DSM 2160 / CIP 103997 / JCM 8858 / NBRC 14720 / NCIMB 2260 / Gabara) (Halobacterium pharaonis).